Here is a 66-residue protein sequence, read N- to C-terminus: ATP synthase F(0) complex subunit 8 (66 aa).

The helical transmembrane segment at 8–24 (TWLTMILSMFLVLFIIF) threads the bilayer. At Lys54 the chain carries N6-acetyllysine; alternate. Lys54 carries the post-translational modification N6-succinyllysine; alternate. At Lys57 the chain carries N6-acetyllysine.

Belongs to the ATPase protein 8 family. In terms of assembly, component of the ATP synthase complex composed at least of ATP5F1A/subunit alpha, ATP5F1B/subunit beta, ATP5MC1/subunit c (homooctomer), MT-ATP6/subunit a, MT-ATP8/subunit 8, ATP5ME/subunit e, ATP5MF/subunit f, ATP5MG/subunit g, ATP5MK/subunit k, ATP5MJ/subunit j, ATP5F1C/subunit gamma, ATP5F1D/subunit delta, ATP5F1E/subunit epsilon, ATP5PF/subunit F6, ATP5PB/subunit b, ATP5PD/subunit d, ATP5PO/subunit OSCP. ATP synthase complex consists of a soluble F(1) head domain (subunits alpha(3) and beta(3)) - the catalytic core - and a membrane F(0) domain - the membrane proton channel (subunits c, a, 8, e, f, g, k and j). These two domains are linked by a central stalk (subunits gamma, delta, and epsilon) rotating inside the F1 region and a stationary peripheral stalk (subunits F6, b, d, and OSCP). Interacts with PRICKLE3.

The protein resides in the mitochondrion membrane. Its function is as follows. Subunit 8, of the mitochondrial membrane ATP synthase complex (F(1)F(0) ATP synthase or Complex V) that produces ATP from ADP in the presence of a proton gradient across the membrane which is generated by electron transport complexes of the respiratory chain. ATP synthase complex consist of a soluble F(1) head domain - the catalytic core - and a membrane F(1) domain - the membrane proton channel. These two domains are linked by a central stalk rotating inside the F(1) region and a stationary peripheral stalk. During catalysis, ATP synthesis in the catalytic domain of F(1) is coupled via a rotary mechanism of the central stalk subunits to proton translocation. In vivo, can only synthesize ATP although its ATP hydrolase activity can be activated artificially in vitro. Part of the complex F(0) domain. This Ovis aries (Sheep) protein is ATP synthase F(0) complex subunit 8.